A 284-amino-acid polypeptide reads, in one-letter code: 4-hydroxybenzoate octaprenyltransferase (284 aa).

The next 8 membrane-spanning stretches (helical) occupy residues 18 to 38 (PIGT…AAEG), 42 to 62 (WHVL…GCVI), 93 to 113 (IILF…MNPL), 136 to 156 (HLPQ…AWAA), 161 to 181 (LPWV…AYDT), 209 to 229 (LIIG…GLHY), 233 to 253 (QSFY…QHLI), and 264 to 284 (AFLN…VAFW).

Belongs to the UbiA prenyltransferase family. It depends on Mg(2+) as a cofactor.

The protein localises to the cell inner membrane. The enzyme catalyses all-trans-octaprenyl diphosphate + 4-hydroxybenzoate = 4-hydroxy-3-(all-trans-octaprenyl)benzoate + diphosphate. The protein operates within cofactor biosynthesis; ubiquinone biosynthesis. Functionally, catalyzes the prenylation of para-hydroxybenzoate (PHB) with an all-trans polyprenyl group. Mediates the second step in the final reaction sequence of ubiquinone-8 (UQ-8) biosynthesis, which is the condensation of the polyisoprenoid side chain with PHB, generating the first membrane-bound Q intermediate 3-octaprenyl-4-hydroxybenzoate. The chain is 4-hydroxybenzoate octaprenyltransferase from Vibrio vulnificus (strain CMCP6).